We begin with the raw amino-acid sequence, 543 residues long: Cytochrome P450 52A1 (543 aa).

Residues Met1–Lys28 lie on the Lumenal side of the membrane. Residues Trp29 to Thr48 form a helical membrane-spanning segment. At Lys49–Leu543 the chain is on the cytoplasmic side. Cys487 serves as a coordination point for heme.

Belongs to the cytochrome P450 family. Heme serves as cofactor.

Its subcellular location is the endoplasmic reticulum membrane. Together with an NADPH cytochrome P450 the enzyme system catalyzes the terminal hydroxylation as the first step in the assimilation of alkanes and fatty acids. This Candida tropicalis (Yeast) protein is Cytochrome P450 52A1 (CYP52A1).